The primary structure comprises 243 residues: Phosphoribosylaminoimidazole-succinocarboxamide synthase (243 aa).

Belongs to the SAICAR synthetase family.

It catalyses the reaction 5-amino-1-(5-phospho-D-ribosyl)imidazole-4-carboxylate + L-aspartate + ATP = (2S)-2-[5-amino-1-(5-phospho-beta-D-ribosyl)imidazole-4-carboxamido]succinate + ADP + phosphate + 2 H(+). It participates in purine metabolism; IMP biosynthesis via de novo pathway; 5-amino-1-(5-phospho-D-ribosyl)imidazole-4-carboxamide from 5-amino-1-(5-phospho-D-ribosyl)imidazole-4-carboxylate: step 1/2. The polypeptide is Phosphoribosylaminoimidazole-succinocarboxamide synthase (Methanobrevibacter smithii (strain ATCC 35061 / DSM 861 / OCM 144 / PS)).